Here is a 472-residue protein sequence, read N- to C-terminus: E3 ubiquitin-protein ligase MYLIP-A (472 aa).

The 279-residue stretch at 1–279 folds into the FERM domain; that stretch reads MLCHVTRPDA…ETHAFYRCDT (279 aa). The RING-type zinc-finger motif lies at 384-419; sequence CMLCCEEEIDAAFCPCGHMVCCQNCAAQLQSCPVCR.

Interacts with anxa5. Ubiquitous.

The protein localises to the cytoplasm. Its subcellular location is the cytosol. The enzyme catalyses S-ubiquitinyl-[E2 ubiquitin-conjugating enzyme]-L-cysteine + [acceptor protein]-L-lysine = [E2 ubiquitin-conjugating enzyme]-L-cysteine + N(6)-ubiquitinyl-[acceptor protein]-L-lysine.. It participates in protein modification; protein ubiquitination. E3 ubiquitin-protein ligase that mediates ubiquitination and subsequent proteasomal degradation of myosin regulatory light chain (MRLC). Regulates cell movements during gastrulation by acting downstream of fz7 to antagonize the frizzled-signaling pathway. In Danio rerio (Zebrafish), this protein is E3 ubiquitin-protein ligase MYLIP-A (mylipa).